Here is a 132-residue protein sequence, read N- to C-terminus: NLP effector protein 15 (132 aa).

A Conserved undecapeptide motif I motif is present at residues 1–9; the sequence is MYSWYFPKD. Positions 16–22 match the Hepta-peptide GHRHDWE motif II motif; the sequence is GHRHDWE.

It belongs to the Necrosis inducing protein (NPP1) family.

It is found in the secreted. Secreted effector that contributes moderately to virulence during infection by P.capsici. Causes only small yellow areas at 3 days after inoculation of host C.annuum leaves; these areas expand somewhat and became necrotic at 7 days after inoculation. Leads only to chlorotic areas, without necrosis at 7 days after non-host N.benthamiana leaves infection. The polypeptide is NLP effector protein 15 (Phytophthora capsici).